We begin with the raw amino-acid sequence, 454 residues long: Maintenance of mitochondrial morphology protein 1 (454 aa).

The Lumenal portion of the chain corresponds to 1–117 (MESNYTGMDG…SFSSWSFAQG (117 aa)). A helical transmembrane segment spans residues 118-138 (LIVGQVSVVLVLIFFIKFFIF). Residues 139–454 (SDSSTKTNPN…ESEPGRETHY (316 aa)) lie on the Cytoplasmic side of the membrane. Residues 144–164 (KTNPNPAKNSSSTNSLSGLSS) form a disordered region. The segment covering 153 to 164 (SSSTNSLSGLSS) has biased composition (low complexity). The region spanning 215–427 (PAESLDWFNV…EPRFQFIKLP (213 aa)) is the SMP-LTD domain. Residues Arg-253, Trp-411, Arg-415, Trp-430, Arg-432, and Ser-433 each contribute to the a 1,2-diacyl-sn-glycero-3-phosphate site. Positions 434–454 (KNTREGKADVDESEPGRETHY) are disordered. The segment covering 435–454 (NTREGKADVDESEPGRETHY) has biased composition (basic and acidic residues).

Belongs to the MMM1 family. As to quaternary structure, homodimer. Component of the ER-mitochondria encounter structure (ERMES) or MDM complex, composed of MMM1, MDM10, MDM12 and MDM34. An MMM1 homodimer associates with one molecule of MDM12 on each side in a pairwise head-to-tail manner, and the SMP-LTD domains of MMM1 and MDM12 generate a continuous hydrophobic tunnel for phospholipid trafficking.

Its subcellular location is the endoplasmic reticulum membrane. Component of the ERMES/MDM complex, which serves as a molecular tether to connect the endoplasmic reticulum (ER) and mitochondria. Components of this complex are involved in the control of mitochondrial shape and protein biogenesis, and function in nonvesicular lipid trafficking between the ER and mitochondria. Preferentially binds to glycerophospholipids such as phosphatidylcholoine (PC), phosphatidic acid (PA), phosphatidylglycerol (PG), and phosphatidylserine (PS), but not to phosphatidylethanolamine (PE). The MDM12-MMM1 subcomplex functions in the major beta-barrel assembly pathway that is responsible for biogenesis of all outer membrane beta-barrel proteins, and acts in a late step after the SAM complex. The MDM10-MDM12-MMM1 subcomplex further acts in the TOM40-specific pathway after the action of the MDM12-MMM1 complex. Essential for establishing and maintaining the structure of mitochondria and maintenance of mtDNA nucleoids. This Zygosaccharomyces rouxii (strain ATCC 2623 / CBS 732 / NBRC 1130 / NCYC 568 / NRRL Y-229) protein is Maintenance of mitochondrial morphology protein 1.